A 422-amino-acid chain; its full sequence is Beta-1,3-galactosyltransferase 2 (422 aa).

The Cytoplasmic segment spans residues 1 to 20; the sequence is MLQWRRRHCCFAKMTWSPKR. The helical; Signal-anchor for type II membrane protein transmembrane segment at 21–43 threads the bilayer; it reads SLLRTPLTGVLSLVFLFAMFLFF. Residues 44–422 lie on the Lumenal side of the membrane; it reads NHHDWLPGRP…AGRYRHRKLH (379 aa). N-linked (GlcNAc...) asparagine glycosylation is found at Asn-75, Asn-98, Asn-119, Asn-176, and Asn-226. Residues 91–110 are disordered; the sequence is LRPHTASNSSNTELSPQGVT. Over residues 95 to 110 the composition is skewed to polar residues; it reads TASNSSNTELSPQGVT.

The protein belongs to the glycosyltransferase 31 family. Mn(2+) serves as cofactor. As to expression, detected in brain and heart.

It localises to the golgi apparatus membrane. It carries out the reaction an N-acetyl-beta-D-glucosaminyl derivative + UDP-alpha-D-galactose = a beta-D-galactosyl-(1-&gt;3)-N-acetyl-beta-D-glucosaminyl derivative + UDP + H(+). The enzyme catalyses a beta-D-GlcNAc-(1-&gt;3)-beta-D-Gal-(1-&gt;4)-beta-D-Glc-(1&lt;-&gt;1)-Cer(d18:1(4E)) + UDP-alpha-D-galactose = a beta-D-Gal-(1-&gt;3)-beta-D-GlcNAc-(1-&gt;3)-beta-D-Gal-(1-&gt;4)-beta-D-Glc-(1&lt;-&gt;1')-Cer(d18:1(4E)) + UDP + H(+). It catalyses the reaction a neolactoside IV(3)-beta-GlcNAc-nLc4Cer(d18:1(4E)) + UDP-alpha-D-galactose = a neolactoside IV(3)-beta-[Gal-beta-(1-&gt;3)-GlcNAc]-nLc4Cer(d18:1(4E)) + UDP + H(+). It participates in protein modification; protein glycosylation. Beta-1,3-galactosyltransferase that transfers galactose from UDP-galactose to substrates with a terminal beta-N-acetylglucosamine (beta-GlcNAc) residue. Can also utilize substrates with a terminal galactose residue, albeit with lower efficiency. Involved in the biosynthesis of the carbohydrate moieties of glycolipids and glycoproteins. The sequence is that of Beta-1,3-galactosyltransferase 2 from Mus musculus (Mouse).